Reading from the N-terminus, the 262-residue chain is Type III pantothenate kinase (262 aa).

Position 6-13 (6-13 (DAGNTNMV)) interacts with ATP. Residues Y100 and 107–110 (GADR) each bind substrate. D109 functions as the Proton acceptor in the catalytic mechanism. D129 is a K(+) binding site. Position 132 (T132) interacts with ATP. Residue T184 coordinates substrate.

Belongs to the type III pantothenate kinase family. As to quaternary structure, homodimer. It depends on NH4(+) as a cofactor. K(+) is required as a cofactor.

Its subcellular location is the cytoplasm. It carries out the reaction (R)-pantothenate + ATP = (R)-4'-phosphopantothenate + ADP + H(+). Its pathway is cofactor biosynthesis; coenzyme A biosynthesis; CoA from (R)-pantothenate: step 1/5. Its function is as follows. Catalyzes the phosphorylation of pantothenate (Pan), the first step in CoA biosynthesis. In Clostridium tetani (strain Massachusetts / E88), this protein is Type III pantothenate kinase.